Here is a 148-residue protein sequence, read N- to C-terminus: Large ribosomal subunit protein bL9 (148 aa).

It belongs to the bacterial ribosomal protein bL9 family.

Its function is as follows. Binds to the 23S rRNA. The protein is Large ribosomal subunit protein bL9 of Geobacter sulfurreducens (strain ATCC 51573 / DSM 12127 / PCA).